The following is a 259-amino-acid chain: tRNA pseudouridine synthase A (259 aa).

Residue Asp-52 is the Nucleophile of the active site. Tyr-111 is a substrate binding site.

The protein belongs to the tRNA pseudouridine synthase TruA family. Homodimer.

It catalyses the reaction uridine(38/39/40) in tRNA = pseudouridine(38/39/40) in tRNA. Formation of pseudouridine at positions 38, 39 and 40 in the anticodon stem and loop of transfer RNAs. This is tRNA pseudouridine synthase A from Ruegeria sp. (strain TM1040) (Silicibacter sp.).